The primary structure comprises 483 residues: Cytochrome P450 71A23 (483 aa).

The chain crosses the membrane as a helical span at residues 1–21; sequence MILFLCLIILFIITILFFKKH. C429 contacts heme.

The protein belongs to the cytochrome P450 family. Requires heme as cofactor.

The protein localises to the membrane. In Arabidopsis thaliana (Mouse-ear cress), this protein is Cytochrome P450 71A23 (CYP71A23).